Here is a 302-residue protein sequence, read N- to C-terminus: Recombination-associated protein RdgC (302 aa).

The protein belongs to the RdgC family.

The protein resides in the cytoplasm. The protein localises to the nucleoid. May be involved in recombination. The sequence is that of Recombination-associated protein RdgC from Tolumonas auensis (strain DSM 9187 / NBRC 110442 / TA 4).